The following is a 326-amino-acid chain: ELAV-like protein 1 (326 aa).

At Ser2 the chain carries N-acetylserine. Ser2 carries the post-translational modification Phosphoserine. The 79-residue stretch at 20–98 folds into the RRM 1 domain; sequence TNLIVNYLPQ…KTIKVSYARP (79 aa). Phosphoserine occurs at positions 100 and 158. In terms of domain architecture, RRM 2 spans 106 to 186; sequence ANLYISGLPR…EPITVKFAAN (81 aa). Residue Lys191 forms a Glycyl lysine isopeptide (Lys-Gly) (interchain with G-Cter in SUMO2) linkage. Residues Ser197 and Ser202 each carry the phosphoserine modification. Position 206 is an omega-N-methylarginine (Arg206). Arg217 carries the asymmetric dimethylarginine; by CARM1; alternate modification. Position 217 is an omega-N-methylarginine; alternate (Arg217). Ser221 and Ser318 each carry phosphoserine. The 79-residue stretch at 244-322 folds into the RRM 3 domain; it reads WCIFIYNLGQ…KILQVSFKTN (79 aa).

This sequence belongs to the RRM elav family. Monomer and homodimer (in vitro). Interacts with ANP32A. Interacts with ZNF385A; the interaction is indirect and mRNA-dependent and may regulate p53/TP53 expression. Identified in a mRNP complex, at least composed of DHX9, DDX3X, ELAVL1, HNRNPU, IGF2BP1, ILF3, PABPC1, PCBP2, PTBP2, STAU1, STAU2, SYNCRIP and YBX1. Interacts with AGO1 and AGO2. Interacts with IGF2BP1; the interaction is enhanced by SEPIN14P20 peptide RBPR. Interacts with IGF2BP2 and IGF2BP3. Interacts with HNRNPL. Interacts with DHX36; this interaction occurs in a RNA-dependent manner. Interacts with ILF3; this interaction occurs in a RNA-dependent manner. Interacts with PLEKHN1. Interacts with SHFL; the interaction increases in presence of RNA. Interacts with YBX1; interaction recruits ELAVL1 on C5-methylcytosine (m5C)-containing mRNAs, thereby promoting mRNA stability. Interacts with FXR1. In terms of processing, phosphorylated by MAPKAPK2. Phosphorylated by PRKCD. Post-translationally, methylated at Arg-217 by CARM1 in macrophages in response to LPS challenge. In terms of tissue distribution, ubiquitous. Detected in brain, liver, thymus and muscle.

The protein resides in the cytoplasm. It is found in the nucleus. The protein localises to the stress granule. It localises to the P-body. Functionally, RNA-binding protein that binds to the 3'-UTR region of mRNAs and increases their stability. Involved in embryonic stem cell (ESC) differentiation: preferentially binds mRNAs that are not methylated by N6-methyladenosine (m6A), stabilizing them, promoting ESC differentiation. Has also been shown to be capable of binding to m6A-containing mRNAs and contributes to MYC stability by binding to m6A-containing MYC mRNAs. Binds to poly-U elements and AU-rich elements (AREs) in the 3'-UTR of target mRNAs. Binds avidly to the AU-rich element in FOS and IL3/interleukin-3 mRNAs. In the case of the FOS AU-rich element, binds to a core element of 27 nucleotides that contain AUUUA, AUUUUA, and AUUUUUA motifs. Binds preferentially to the 5'-UUUU[AG]UUU-3' motif in vitro. With ZNF385A, binds the 3'-UTR of p53/TP53 mRNA to control their nuclear export induced by CDKN2A. Hence, may regulate p53/TP53 expression and mediate in part the CDKN2A anti-proliferative activity. May also bind with ZNF385A the CCNB1 mRNA. Increases the stability of the leptin mRNA harboring an AU-rich element (ARE) in its 3' UTR. The polypeptide is ELAV-like protein 1 (ELAVL1) (Homo sapiens (Human)).